Reading from the N-terminus, the 53-residue chain is Neuronal protein NP-190 (53 aa).

Mainly expressed in the fetal brain where it is specifically localized to the proximal axonal segments, cell bodies and growth cones. Lower level of expression was also detected in the fetal heart and the skeletal muscle. No expression in kidney, liver, lung or spleen.

The protein resides in the membrane. Its function is as follows. Neuronal antigen that may play a role in brain development. May be involved in neurite formation or axonal guidance. The polypeptide is Neuronal protein NP-190 (Sus scrofa (Pig)).